The following is a 436-amino-acid chain: MAVTVETLEKLERKITLSLPLTTIQTEVDARLKRLARTVKMDGFRPGKVPMSVVAQRYGYSVQYEVLNDKVGEAFAQAANEANLRVAGQPRITEKDGAPEGEVTFDAVFEVFPEVKIGDLSTAEVEKLSAEVTDSAIDKTVDILRKQRRTFAQRALAAAAEDGDRVTVDFEGKIDGEPFQGGKAEDFQFLVGEGQMLKEFEDAVRGMKSGESKTFPLAFPEDYHGKDVAGKTADFMVTVKKIEAAHLPEVNEQLAKSLGIADGTVEGLRADIKKNLEREVKFRLLARNKQAVMDALVSKAELDLPNASVQAEIARLLEAARADLKQRGIKDADKAEIPEDVFRPQAERRVRLGLVVAELVRANNLQAKPEQLKAHVDELAASYEKPEDVVRWYFSDRNRLAEVEAVVIENNVTDFVLGQAKVNDKAVSFDELMGQA.

Residues 163–248 form the PPIase FKBP-type domain; the sequence is GDRVTVDFEG…VKKIEAAHLP (86 aa).

Belongs to the FKBP-type PPIase family. Tig subfamily.

It localises to the cytoplasm. The enzyme catalyses [protein]-peptidylproline (omega=180) = [protein]-peptidylproline (omega=0). Its function is as follows. Involved in protein export. Acts as a chaperone by maintaining the newly synthesized protein in an open conformation. Functions as a peptidyl-prolyl cis-trans isomerase. The chain is Trigger factor from Acidovorax ebreus (strain TPSY) (Diaphorobacter sp. (strain TPSY)).